A 214-amino-acid polypeptide reads, in one-letter code: Putative ankyrin repeat protein RF_1081 (214 aa).

The segment covering 1-14 (MRKQQIPTLSTSAL) has biased composition (polar residues). Residues 1-32 (MRKQQIPTLSTSALDKSPGPGSPDSDIEMKST) form a disordered region. The stretch at 67 to 135 (NPNALLHEAA…EEPILVTKKD (69 aa)) is one ANK repeat.

This Rickettsia felis (strain ATCC VR-1525 / URRWXCal2) (Rickettsia azadi) protein is Putative ankyrin repeat protein RF_1081.